The chain runs to 222 residues: 23kDa protein (222 aa).

Positions 1-12 (MEPHDQSGSTTR) are enriched in polar residues. The tract at residues 1–21 (MEPHDQSGSTTRQLDEIRDRR) is disordered.

May act as a regulatory factor during viral transcription. The chain is 23kDa protein from Indian citrus ringspot virus (isolate Kinnow mandarin/India/K1/1996) (ICRSV).